Reading from the N-terminus, the 30-residue chain is Ornithine carbamoyltransferase (30 aa).

It belongs to the aspartate/ornithine carbamoyltransferase superfamily. OTCase family.

It localises to the cytoplasm. The enzyme catalyses carbamoyl phosphate + L-ornithine = L-citrulline + phosphate + H(+). It participates in amino-acid biosynthesis; L-arginine biosynthesis; L-arginine from L-ornithine and carbamoyl phosphate: step 1/3. In terms of biological role, has vitronectin and fibronectin-binding activity. The protein is Ornithine carbamoyltransferase (argF) of Staphylococcus epidermidis.